The primary structure comprises 158 residues: NAD(P)H-quinone oxidoreductase subunit J, chloroplastic (158 aa).

This sequence belongs to the complex I 30 kDa subunit family. In terms of assembly, NDH is composed of at least 16 different subunits, 5 of which are encoded in the nucleus.

Its subcellular location is the plastid. It localises to the chloroplast thylakoid membrane. The enzyme catalyses a plastoquinone + NADH + (n+1) H(+)(in) = a plastoquinol + NAD(+) + n H(+)(out). The catalysed reaction is a plastoquinone + NADPH + (n+1) H(+)(in) = a plastoquinol + NADP(+) + n H(+)(out). Its function is as follows. NDH shuttles electrons from NAD(P)H:plastoquinone, via FMN and iron-sulfur (Fe-S) centers, to quinones in the photosynthetic chain and possibly in a chloroplast respiratory chain. The immediate electron acceptor for the enzyme in this species is believed to be plastoquinone. Couples the redox reaction to proton translocation, and thus conserves the redox energy in a proton gradient. This Olimarabidopsis pumila (Dwarf rocket) protein is NAD(P)H-quinone oxidoreductase subunit J, chloroplastic.